Here is an 802-residue protein sequence, read N- to C-terminus: ATP-dependent zinc metalloprotease FTSH 3, mitochondrial (802 aa).

The transit peptide at 1-21 (MSLSSLSRALARSARSSRQRQ) directs the protein to the mitochondrion. Positions 1 to 23 (MSLSSLSRALARSARSSRQRQGS) are enriched in low complexity. Disordered regions lie at residues 1–33 (MSLS…GLRA) and 85–120 (DKSK…SGDQ). Over residues 85-113 (DKSKKNHGKHSEEENKGKGDESDKSDSKK) the composition is skewed to basic and acidic residues. A helical membrane pass occupies residues 133–153 (MIAPLFLFGLLLLSASASSSE). 360-367 (GPPGTGKT) is a binding site for ATP. Histidine 585 is a binding site for Zn(2+). Glutamate 586 is an active-site residue. 2 residues coordinate Zn(2+): histidine 589 and aspartate 661. Residues 773–802 (KQGFQDEDSNRNAELSNADGASSLGEAVAS) form a disordered region.

The protein in the N-terminal section; belongs to the AAA ATPase family. In the C-terminal section; belongs to the peptidase M41 family. Requires Zn(2+) as cofactor.

The protein localises to the mitochondrion inner membrane. Probable ATP-dependent zinc metallopeptidase. The sequence is that of ATP-dependent zinc metalloprotease FTSH 3, mitochondrial (FTSH3) from Oryza sativa subsp. japonica (Rice).